Here is a 101-residue protein sequence, read N- to C-terminus: Small ribosomal subunit protein uS14 (101 aa).

The protein belongs to the universal ribosomal protein uS14 family. As to quaternary structure, part of the 30S ribosomal subunit. Contacts proteins S3 and S10.

Binds 16S rRNA, required for the assembly of 30S particles and may also be responsible for determining the conformation of the 16S rRNA at the A site. This is Small ribosomal subunit protein uS14 from Ehrlichia canis (strain Jake).